The sequence spans 505 residues: Cytochrome P450 2K6 (505 aa).

A helical membrane pass occupies residues 7–27; sequence FLLQGSPTGTILGALLLFLVI. C448 lines the heme pocket.

This sequence belongs to the cytochrome P450 family. Heme serves as cofactor. Detected in liver and ovary.

It is found in the endoplasmic reticulum membrane. Its subcellular location is the microsome membrane. Its function is as follows. Metabolizes aflatoxin B1 (AFB1) to the cytotoxic derivative AFB1 exo-8,9-epoxide. Does not show activity towards lauric acid. This chain is Cytochrome P450 2K6, found in Danio rerio (Zebrafish).